Reading from the N-terminus, the 1088-residue chain is MALHFQSLAELEVLCTHLYVGTDLTERIEAEKALLELIDSPECLSKCQLLLEQGTTSYAQLLAATCLSKLVTRINPLPIEQRIDIRNYILNYVASQPKLAPFVIQALIQVIAKLTKLGWFEVQKDEFVFREIIADVKKFLQGTVEHCIIGVIILCELTQEMNLVDYSRPSAKHRKIATSFRDTSLKDILVLACSLLKQVLAKPLNLQDQDQQSLVMQVLKLVLSCLNFDFLGSSADESADDLCTVQIPTTWRTIFLEPETLDLFFNLYHSLPPLLSQLALSCLVQFASTRRSLFSSPERAKYLGNLIKGVKRILENPQGLSDPGNYHEFCRFLARLKTNYQLGELVLVKEYAEVIGLIANFTITSLQHWEFAPNSVHYLLTLWQRMVASVPFVKSAEPHLLDTYAPEITKAFITSRLESVAIVVRDNLEDPLDDTATVFQQLEQLCTVSRCEYEKTCTLLVQLFDQNAQNYQKLLHAAPGLAVDMAIQEGRLAWLIYLVGTVVGGRLTYTSTDEHDAMDGELSCRVFQLISLMDTRLPHCTNEKIELAVLWFLDQFRKTYVGDQLQRTSKVYARMSEVLGITDDNHVLETFMTKIVTNLKYWGRCEPVISRTLQFLSDLSVGYILLKKLVKIDAVKFMLKNHTSEHFPFLGISETYNVGDFRCRTTFYTALTRLLMVDLGEDEDEFENFMLPLTVSFETVLQIFNNNFKQEEVKRMLIGLARDLRGIAFALNTKTSYTMLFDWIYPAYLPVLQRAIERWYGEPACTTPILKLLAELMQNRSQRLNFDVSSPNGILLFREASKMICTYGNQILSLGSLSKDKIYPMKLKGISICYSALKSALCGNYVSFGVFKLYGDNHFDNVLQAFVKMLLSVSHSDLLQYRKLSQSYYPLLECLTQDHMSFITNLEPPVLLYVLTSLSEGLTTLDTVVSSSCCTSLDYMVTYLFKHIAKEGKKPLRSREAMQAGQRLLHFMQQNPDVLQQMMSVLMNTIVFEDCRNQWSVSRPLLGLILLNEKYFSELRASLINSQPLPKQEVLGQCFRNLMEGVEQNLSVKNRDRFTQNLSVFRRDVAEALRSDGHTDLSSLDMMS.

The residue at position 2 (Ala2) is an N-acetylalanine. Residue Ser569 is modified to Phosphoserine.

It belongs to the exportin family. In terms of assembly, binds to nucleoporins and the GTP-bound form of Ran. Highly expressed in primary spermatocytes and very weakly in pancreas.

Its subcellular location is the cytoplasm. It localises to the nucleus. The protein resides in the nuclear pore complex. May function as a nuclear transport receptor. This is Ran-binding protein 17 (Ranbp17) from Mus musculus (Mouse).